The primary structure comprises 260 residues: MSAIHPTAIVEDGAILGENVSVGPFAYIGAKVSIDDGTSVASHAVIEGRTSIGKNNRIFSHSAIGTIPQDLKYAGEDVELIIGDNNNIREFTLLNPGTKGGGSVTKIGNGNLLMGYVHLGHDVILGDNCILANGATLAGHVELGNNVVIGGLTPVHQFVHVGDFAMIGGASALAQDIPPYCLAEGNRATLRGLNLTGLRRHIPREEINALKSAYRELFEEGKALQDVAQRLFEESSSEKVKNLCKFIKTSKRGIPFTRKS.

This sequence belongs to the transferase hexapeptide repeat family. LpxA subfamily. In terms of assembly, homotrimer.

The protein resides in the cytoplasm. It catalyses the reaction a (3R)-hydroxyacyl-[ACP] + UDP-N-acetyl-alpha-D-glucosamine = a UDP-3-O-[(3R)-3-hydroxyacyl]-N-acetyl-alpha-D-glucosamine + holo-[ACP]. The protein operates within glycolipid biosynthesis; lipid IV(A) biosynthesis; lipid IV(A) from (3R)-3-hydroxytetradecanoyl-[acyl-carrier-protein] and UDP-N-acetyl-alpha-D-glucosamine: step 1/6. Functionally, involved in the biosynthesis of lipid A, a phosphorylated glycolipid that anchors the lipopolysaccharide to the outer membrane of the cell. This chain is Acyl-[acyl-carrier-protein]--UDP-N-acetylglucosamine O-acyltransferase, found in Sulfurovum sp. (strain NBC37-1).